The following is a 295-amino-acid chain: Nucleotide-binding protein LSEI_0959 (295 aa).

12–19 (GMSGAGKT) is a binding site for ATP. 62–65 (DLRS) is a binding site for GTP.

The protein belongs to the RapZ-like family.

Functionally, displays ATPase and GTPase activities. The polypeptide is Nucleotide-binding protein LSEI_0959 (Lacticaseibacillus paracasei (strain ATCC 334 / BCRC 17002 / CCUG 31169 / CIP 107868 / KCTC 3260 / NRRL B-441) (Lactobacillus paracasei)).